The sequence spans 270 residues: Transcription factor PU.1 (270 aa).

Residues 124-162 are disordered; it reads LSPAQPSSDEEEGERQSPPLEVSDGEADGLEPGPGLLHG. Residues S140 and S146 each carry the phosphoserine modification. A compositionally biased stretch (low complexity) spans 153–162; the sequence is LEPGPGLLHG. A DNA-binding region (ETS) is located at residues 170–253; it reads IRLYQFLLDL…VKKKLTYQFS (84 aa). DNA is bound by residues K217, R230, R233, and K243.

The protein belongs to the ETS family. As to quaternary structure, binds DNA as a monomer. Can form homomers. Directly interacts with CEBPD/NF-IL6-beta; this interaction does not affect DNA-binding properties of each partner. Interacts with NONO/p54(nrb). Interacts with RUNX1/AML1. Interacts with GFI1; the interaction represses SPI1 transcriptional activity, hence blocks SPI1-induced macrophage differentiation of myeloid progenitor cells. Interacts with CEBPE. Interacts with IRF4/Pip and IRF8. Interacts with JUN. Interacts with RB1. Interacts with TBP.

The protein resides in the nucleus. With respect to regulation, transcriptional activity at macrophage-specific genes is inhibited by interaction with GFI1, which results in the inhibition of SPI1-induced macrophage differentiation of myeloid progenitor cells, but not that of the granulocyte lineage. In terms of biological role, pioneer transcription factor, which controls hematopoietic cell fate by decompacting stem cell heterochromatin and allowing other transcription factors to enter otherwise inaccessible genomic sites. Once in open chromatin, can directly control gene expression by binding genetic regulatory elements and can also more broadly influence transcription by recruiting transcription factors, such as interferon regulatory factors (IRFs), to otherwise inaccessible genomic regions. Transcriptionally activates genes important for myeloid and lymphoid lineages, such as CSF1R. Transcriptional activation from certain promoters, possibly containing low affinity binding sites, is achieved cooperatively with other transcription factors. FCER1A transactivation is achieved in cooperation with GATA1. May be particularly important for the pro- to pre-B cell transition. Binds (via the ETS domain) onto the purine-rich DNA core sequence 5'-GAGGAA-3', also known as the PU-box. In vitro can bind RNA and interfere with pre-mRNA splicing. This is Transcription factor PU.1 (SPI1) from Sus scrofa (Pig).